Reading from the N-terminus, the 561-residue chain is Dihydroxy-acid dehydratase (561 aa).

Cysteine 51 serves as a coordination point for [2Fe-2S] cluster. Aspartate 83 is a binding site for Mg(2+). Cysteine 124 lines the [2Fe-2S] cluster pocket. Mg(2+)-binding residues include aspartate 125 and lysine 126. Lysine 126 is subject to N6-carboxylysine. Residue cysteine 196 coordinates [2Fe-2S] cluster. Glutamate 447 contributes to the Mg(2+) binding site. The active-site Proton acceptor is serine 473.

The protein belongs to the IlvD/Edd family. As to quaternary structure, homodimer. [2Fe-2S] cluster serves as cofactor. Mg(2+) is required as a cofactor.

The catalysed reaction is (2R)-2,3-dihydroxy-3-methylbutanoate = 3-methyl-2-oxobutanoate + H2O. It carries out the reaction (2R,3R)-2,3-dihydroxy-3-methylpentanoate = (S)-3-methyl-2-oxopentanoate + H2O. It functions in the pathway amino-acid biosynthesis; L-isoleucine biosynthesis; L-isoleucine from 2-oxobutanoate: step 3/4. It participates in amino-acid biosynthesis; L-valine biosynthesis; L-valine from pyruvate: step 3/4. Its function is as follows. Functions in the biosynthesis of branched-chain amino acids. Catalyzes the dehydration of (2R,3R)-2,3-dihydroxy-3-methylpentanoate (2,3-dihydroxy-3-methylvalerate) into 2-oxo-3-methylpentanoate (2-oxo-3-methylvalerate) and of (2R)-2,3-dihydroxy-3-methylbutanoate (2,3-dihydroxyisovalerate) into 2-oxo-3-methylbutanoate (2-oxoisovalerate), the penultimate precursor to L-isoleucine and L-valine, respectively. The chain is Dihydroxy-acid dehydratase from Oceanobacillus iheyensis (strain DSM 14371 / CIP 107618 / JCM 11309 / KCTC 3954 / HTE831).